A 143-amino-acid chain; its full sequence is Hemoglobin cathodic subunit alpha (143 aa).

Ser2 carries the post-translational modification N-acetylserine. In terms of domain architecture, Globin spans 2–143 (SLTAKDKSLI…LGAALSDKYR (142 aa)). Residue His60 coordinates O2. A heme b-binding site is contributed by His89.

The protein belongs to the globin family. As to quaternary structure, heterotetramer of two alpha chains and two beta chains. In terms of tissue distribution, red blood cells.

Its function is as follows. Involved in oxygen transport from gills to the various peripheral tissues. In Anguilla anguilla (European freshwater eel), this protein is Hemoglobin cathodic subunit alpha.